Reading from the N-terminus, the 424-residue chain is Protein UL117 (424 aa).

Residues 57–82 (IVPTTSSSLAPPRDDERRPTPPLRPP) form a disordered region.

It belongs to the herpesviridae U84 family.

It is found in the host nucleus. In terms of biological role, plays a role in the inhibition of host DNA replication in the infected cell. Targets the mini-chromosome maintenance (MCM) complex and blocks the accumulation of MCM proteins and their loading onto host chromatin. The sequence is that of Protein UL117 (UL117) from Human cytomegalovirus (strain AD169) (HHV-5).